A 228-amino-acid chain; its full sequence is Ion-translocating oxidoreductase complex subunit G (228 aa).

The chain crosses the membrane as a helical span at residues 35–55 (ALSLGLVCALVAVALLLGNQL). Threonine 197 carries the FMN phosphoryl threonine modification.

It belongs to the RnfG family. As to quaternary structure, the complex is composed of six subunits: RnfA, RnfB, RnfC, RnfD, RnfE and RnfG. Requires FMN as cofactor.

It is found in the cell inner membrane. Part of a membrane-bound complex that couples electron transfer with translocation of ions across the membrane. This is Ion-translocating oxidoreductase complex subunit G from Stutzerimonas stutzeri (Pseudomonas stutzeri).